We begin with the raw amino-acid sequence, 154 residues long: Pro-corazonin (154 aa).

A signal peptide spans 1-19 (MLRLLLLPLFLFTLSMCMG). The residue at position 20 (Gln20) is a Pyrrolidone carboxylic acid. The residue at position 30 (Asn30) is an Asparagine amide. Positions 70–154 (LERCLSQLQR…SAEPNVFGKH (85 aa)) are excised as a propeptide.

This sequence belongs to the corazonin family. In terms of tissue distribution, expression is restricted to 24 neurons in the larval CNS (8 in the brain and 16 in the ventral nerve cord) and 12-16 neurons in the pars lateralis of the adult brain.

The protein localises to the secreted. In terms of biological role, cardioactive peptide. Corazonin is probably involved in the physiological regulation of the heart beat. Clock (Clk) and cycle (cyc) proteins negatively regulate Crz transcription in a cell-specific manner. The protein is Pro-corazonin (Crz) of Drosophila erecta (Fruit fly).